We begin with the raw amino-acid sequence, 1171 residues long: Protein diaphanous homolog 3 (1171 aa).

Residues 1–15 (MERHRARALGRDSKS) are compositionally biased toward basic and acidic residues. The disordered stretch occupies residues 1–40 (MERHRARALGRDSKSSRRKGLQSAPPAGPYEPGEKRPKLH). Positions 16-39 (SRRKGLQSAPPAGPYEPGEKRPKL) match the Nuclear localization signal motif. The residue at position 47 (T47) is a Phosphothreonine. A Phosphoserine modification is found at S56. The disordered stretch occupies residues 60 to 95 (PGSKKERPPLPHLKTVSGISDSSSLSSETMENNPKA). A compositionally biased stretch (low complexity) spans 76–86 (SGISDSSSLSS). The region spanning 93-455 (PKALPESEVL…QIVLHRDGTD (363 aa)) is the GBD/FH3 domain. S154 is subject to Phosphoserine. 2 coiled-coil regions span residues 373-403 (EHKE…YSML) and 478-533 (QAKL…FGAL). Residues 532–601 (ALPPGTKIPL…PPPPLGFLGG (70 aa)) form a disordered region. In terms of domain architecture, FH1 spans 540–610 (PLQPSVEGEA…GQSSIPLNLP (71 aa)). Residues 553–596 (ALPPAPPALSGGVPPPPPPPPPPPPPLPGMPMPFGGPVPPPPPL) show a composition bias toward pro residues. S604 carries the post-translational modification Phosphoserine. Positions 615 to 1013 (PKKEFKPEIS…EKRARIAKER (399 aa)) constitute an FH2 domain. Coiled coils occupy residues 887–918 (DKAS…LETF) and 988–1038 (MLAL…GDET). Residues 1036 to 1066 (DETGVMDSLLEALQSGAAFRDRRKRTPKLKD) form the DAD domain. Residues S1072 and S1157 each carry the phosphoserine modification. The short motif at 1162–1171 (EALLARLRAL) is the Nuclear export signal element.

It belongs to the formin homology family. Diaphanous subfamily. Ubiquitinated.

The protein localises to the cytoplasm. It localises to the nucleus. In terms of biological role, actin nucleation and elongation factor required for the assembly of F-actin structures, such as actin cables and stress fibers. Required for cytokinesis, stress fiber formation and transcriptional activation of the serum response factor. Binds to GTP-bound form of Rho and to profilin: acts in a Rho-dependent manner to recruit profilin to the membrane, where it promotes actin polymerization. DFR proteins couple Rho and Src tyrosine kinase during signaling and the regulation of actin dynamics. Also acts as an actin nucleation and elongation factor in the nucleus by promoting nuclear actin polymerization inside the nucleus to drive serum-dependent SRF-MRTFA activity. This Mus musculus (Mouse) protein is Protein diaphanous homolog 3 (Diaph3).